A 424-amino-acid chain; its full sequence is Satellite RNA 48 kDa protein (424 aa).

A disordered region spans residues 15 to 78 (TQTRPRIVPK…SNNPGRPSRK (64 aa)). 2 stretches are compositionally biased toward polar residues: residues 31–42 (RTYSRPRSSLSD) and 62–73 (NGSQGRCSNNPG).

It belongs to the nepovirus satellite RNA 48 kDa protein family.

The polypeptide is Satellite RNA 48 kDa protein (Allium porrum (Leek)).